The primary structure comprises 204 residues: Urease accessory protein UreG (204 aa).

12–19 (GPVGSGKT) serves as a coordination point for GTP.

The protein belongs to the SIMIBI class G3E GTPase family. UreG subfamily. Homodimer. UreD, UreF and UreG form a complex that acts as a GTP-hydrolysis-dependent molecular chaperone, activating the urease apoprotein by helping to assemble the nickel containing metallocenter of UreC. The UreE protein probably delivers the nickel.

The protein resides in the cytoplasm. Facilitates the functional incorporation of the urease nickel metallocenter. This process requires GTP hydrolysis, probably effectuated by UreG. The polypeptide is Urease accessory protein UreG (Hahella chejuensis (strain KCTC 2396)).